A 1420-amino-acid polypeptide reads, in one-letter code: DNA-directed RNA polymerase subunit beta' (1420 aa).

Residues Cys70, Cys72, Cys85, and Cys88 each coordinate Zn(2+). Mg(2+) contacts are provided by Asp464, Asp466, and Asp468. The Zn(2+) site is built by Cys823, Cys897, Cys904, and Cys907.

Belongs to the RNA polymerase beta' chain family. As to quaternary structure, the RNAP catalytic core consists of 2 alpha, 1 beta, 1 beta' and 1 omega subunit. When a sigma factor is associated with the core the holoenzyme is formed, which can initiate transcription. Requires Mg(2+) as cofactor. Zn(2+) is required as a cofactor.

It carries out the reaction RNA(n) + a ribonucleoside 5'-triphosphate = RNA(n+1) + diphosphate. Its function is as follows. DNA-dependent RNA polymerase catalyzes the transcription of DNA into RNA using the four ribonucleoside triphosphates as substrates. This chain is DNA-directed RNA polymerase subunit beta', found in Polynucleobacter necessarius subsp. necessarius (strain STIR1).